The primary structure comprises 155 residues: Ribosomal RNA large subunit methyltransferase H (155 aa).

S-adenosyl-L-methionine is bound by residues Leu-72, Gly-103, and 122–127; that span reads LSPLTL.

This sequence belongs to the RNA methyltransferase RlmH family. Homodimer.

It is found in the cytoplasm. The catalysed reaction is pseudouridine(1915) in 23S rRNA + S-adenosyl-L-methionine = N(3)-methylpseudouridine(1915) in 23S rRNA + S-adenosyl-L-homocysteine + H(+). Functionally, specifically methylates the pseudouridine at position 1915 (m3Psi1915) in 23S rRNA. The chain is Ribosomal RNA large subunit methyltransferase H from Actinobacillus pleuropneumoniae serotype 5b (strain L20).